The sequence spans 328 residues: GMP reductase (328 aa).

Cysteine 176 serves as the catalytic Thioimidate intermediate. 205–228 (IIADGGIRTHGDIAKSIRFGASMI) provides a ligand contact to NADP(+).

This sequence belongs to the IMPDH/GMPR family. GuaC type 2 subfamily.

It catalyses the reaction IMP + NH4(+) + NADP(+) = GMP + NADPH + 2 H(+). Functionally, catalyzes the irreversible NADPH-dependent deamination of GMP to IMP. It functions in the conversion of nucleobase, nucleoside and nucleotide derivatives of G to A nucleotides, and in maintaining the intracellular balance of A and G nucleotides. The chain is GMP reductase from Streptococcus pneumoniae serotype 2 (strain D39 / NCTC 7466).